Reading from the N-terminus, the 218-residue chain is Large ribosomal subunit protein bL25 (218 aa).

The disordered stretch occupies residues 186–218 (AVEEEVPAEDEEIMPEPEVIGEEDEGDEEEPEE).

This sequence belongs to the bacterial ribosomal protein bL25 family. CTC subfamily. Part of the 50S ribosomal subunit; part of the 5S rRNA/L5/L18/L25 subcomplex. Contacts the 5S rRNA. Binds to the 5S rRNA independently of L5 and L18.

Its function is as follows. This is one of the proteins that binds to the 5S RNA in the ribosome where it forms part of the central protuberance. The sequence is that of Large ribosomal subunit protein bL25 from Halothermothrix orenii (strain H 168 / OCM 544 / DSM 9562).